Reading from the N-terminus, the 688-residue chain is Glycine--tRNA ligase beta subunit (688 aa).

It belongs to the class-II aminoacyl-tRNA synthetase family. Tetramer of two alpha and two beta subunits.

It is found in the cytoplasm. The catalysed reaction is tRNA(Gly) + glycine + ATP = glycyl-tRNA(Gly) + AMP + diphosphate. The chain is Glycine--tRNA ligase beta subunit from Syntrophotalea carbinolica (strain DSM 2380 / NBRC 103641 / GraBd1) (Pelobacter carbinolicus).